The sequence spans 307 residues: 1D-myo-inositol 2-acetamido-2-deoxy-alpha-D-glucopyranoside deacetylase 1 (307 aa).

Residues His21, Asp24, and His157 each contribute to the Zn(2+) site.

It belongs to the MshB deacetylase family. The cofactor is Zn(2+).

It carries out the reaction 1D-myo-inositol 2-acetamido-2-deoxy-alpha-D-glucopyranoside + H2O = 1D-myo-inositol 2-amino-2-deoxy-alpha-D-glucopyranoside + acetate. Its function is as follows. Catalyzes the deacetylation of 1D-myo-inositol 2-acetamido-2-deoxy-alpha-D-glucopyranoside (GlcNAc-Ins) in the mycothiol biosynthesis pathway. In Frankia casuarinae (strain DSM 45818 / CECT 9043 / HFP020203 / CcI3), this protein is 1D-myo-inositol 2-acetamido-2-deoxy-alpha-D-glucopyranoside deacetylase 1.